A 194-amino-acid polypeptide reads, in one-letter code: uncharacterized protein (194 aa).

2 disordered regions span residues 52 to 71 (KGRT…EKYK) and 86 to 194 (AEAL…DGGS). 3 stretches are compositionally biased toward polar residues: residues 53-63 (GRTTQSAINSE), 98-111 (ALTS…SSTN), and 119-132 (IAHS…TSPA). A compositionally biased stretch (basic residues) spans 133–169 (NRHRRKEKERTRSNHRHGSHRRHEPYRTHLSRHHRHS). Residues 175-194 (SKRDDRYERRREHSPNDGGS) show a composition bias toward basic and acidic residues.

This is an uncharacterized protein from Schizosaccharomyces pombe (strain 972 / ATCC 24843) (Fission yeast).